Reading from the N-terminus, the 426-residue chain is MKMPLTWYSWFLLSAWILNTGAEISITPEPAQPAEGDNVTLVVHGLSGELLAYNWYAGPTLSLTFLVASYIVSTGDETPGPAHTGREAVRPDGSLDIHGALPGHTGTYILQTLNRQFQTEVGYGHMQVYEILAPPTVMANDTALVERRDTLRLVCSSPSPAEVRWFFNGDALPVAVRLGMSPDGRMLTRHGVRREEAGAYQCEVWNPVSVSRSEPLNLTVYFGPERVAILQDSTTRTGCTIKVDFNMSLTLWCVARSCPEPEYVWAFNGKALKNGQDHLNISSMTAAHEGTYTCIAKNSKTLLSGSASVVVKLSAAAVAMMIVPVPTKPTEGQDVTLTVQGYPKDLLVYAWYRGPASEPNRLLSQLPSGNWIAGPAHTGREVGFANCSLLVQKLNLTDAGRYTLKTVTLQGKTDTLEVELQVAPLE.

Positions 1-22 (MKMPLTWYSWFLLSAWILNTGA) are cleaved as a signal peptide. Asn-38 carries an N-linked (GlcNAc...) asparagine glycan. The disordered stretch occupies residues 77–96 (ETPGPAHTGREAVRPDGSLD). Positions 84–95 (TGREAVRPDGSL) are enriched in basic and acidic residues. 2 consecutive Ig-like C2-type domains span residues 134 to 219 (PPTV…LNLT) and 224 to 310 (PERV…ASVV). An intrachain disulfide couples Cys-155 to Cys-202. N-linked (GlcNAc...) asparagine glycosylation is present at Asn-217. Residues Cys-253 and Cys-294 are joined by a disulfide bond.

This sequence belongs to the immunoglobulin superfamily. CEA family. In terms of assembly, homooligomer; can for homodimers and homotetramers. Interacts with TECTA and TECTB. Expressed in cochlear outer hair cells (OHC).

The protein localises to the secreted. Required for proper hearing, plays a role in maintaining the integrity of the tectorial membrane. The polypeptide is Cell adhesion molecule CEACAM16 (Mus musculus (Mouse)).